The sequence spans 605 residues: Xylan O-acetyltransferase 7 (605 aa).

Residues 1–124 are Cytoplasmic-facing; that stretch reads MKKKKNGMGA…AKQPSPRRTP (124 aa). The tract at residues 86–126 is disordered; the sequence is PCHLLPIQGQGQMQMQQRRKPPPAAAPVAAKQPSPRRTPGP. A helical; Signal-anchor for type II membrane protein transmembrane segment spans residues 125–145; it reads GPLSFAGALLSLLVVATFLYI. Residues 146 to 605 are Lumenal-facing; sequence NDHGNMMPPH…LYAHIVAHAA (460 aa). Residues Asn192 and Asn218 are each glycosylated (N-linked (GlcNAc...) asparagine). 4 cysteine pairs are disulfide-bonded: Cys243-Cys296, Cys267-Cys332, Cys276-Cys584, and Cys499-Cys580. Residues 319–321 carry the GDS motif motif; the sequence is GDS. The active-site Nucleophile is Ser321. N-linked (GlcNAc...) asparagine glycans are attached at residues Asn351, Asn363, Asn471, and Asn508. The active-site Proton donor is the Asp579. The short motif at 579 to 582 is the DXXH motif element; the sequence is DCIH. The active-site Proton acceptor is the His582.

It belongs to the PC-esterase family. TBL subfamily. As to expression, expressed in roots, leaves and stems.

It localises to the golgi apparatus membrane. In terms of biological role, xylan acetyltransferase required for 2-O- and 3-O-monoacetylation of xylosyl residues in xylan. Catalyzes the 2-O-acetylation of xylan, followed by nonenzymatic acetyl migration to the O-3 position, resulting in products that are monoacetylated at both O-2 and O-3 positions. In Oryza sativa subsp. japonica (Rice), this protein is Xylan O-acetyltransferase 7.